A 527-amino-acid polypeptide reads, in one-letter code: Glutamate--cysteine ligase (527 aa).

Belongs to the glutamate--cysteine ligase type 1 family. Type 1 subfamily.

It carries out the reaction L-cysteine + L-glutamate + ATP = gamma-L-glutamyl-L-cysteine + ADP + phosphate + H(+). It participates in sulfur metabolism; glutathione biosynthesis; glutathione from L-cysteine and L-glutamate: step 1/2. In Pseudomonas paraeruginosa (strain DSM 24068 / PA7) (Pseudomonas aeruginosa (strain PA7)), this protein is Glutamate--cysteine ligase.